The primary structure comprises 413 residues: MAP kinase-interacting serine/threonine-protein kinase 1 (413 aa).

The segment at 1–26 (MGSSEPLPIVDSDKRRKKKRKTRATD) is disordered. Threonine 22 carries the phosphothreonine; by PAK2 modification. Serine 27 is modified (phosphoserine; by PAK2). The 285-residue stretch at 37–321 (QLTSELLGEG…AAQVLQHPWV (285 aa)) folds into the Protein kinase domain. ATP is bound by residues 43-51 (LGEGAYAKV) and lysine 66. Aspartate 158 serves as the catalytic Proton acceptor. Residues serine 168 and serine 173 each carry the phosphoserine modification. Residues threonine 197, threonine 202, and threonine 332 each carry the phosphothreonine modification.

Belongs to the protein kinase superfamily. CAMK Ser/Thr protein kinase family. In terms of assembly, interacts with the C-terminal regions of EIF4G1 and EIF4G2. Also binds to dephosphorylated ERK1 and ERK2, and to the p38 kinases. Requires Mg(2+) as cofactor. Dual phosphorylation of Thr-197 and Thr-202 activates the kinase. Phosphorylation of Thr-332 activates the kinase. MAPK3/ERK1 is one of the kinases which activate MKNK1/MNK1. Phosphorylation by PAK2 leads to a reduced phosphorylation of EIF4G1.

It carries out the reaction L-seryl-[protein] + ATP = O-phospho-L-seryl-[protein] + ADP + H(+). The enzyme catalyses L-threonyl-[protein] + ATP = O-phospho-L-threonyl-[protein] + ADP + H(+). With respect to regulation, phosphorylated and activated by the p38 kinases and kinases in the Erk pathway. Functionally, may play a role in the response to environmental stress and cytokines. Appears to regulate translation by phosphorylating EIF4E, thus increasing the affinity of this protein for the 7-methylguanosine-containing mRNA cap. The polypeptide is MAP kinase-interacting serine/threonine-protein kinase 1 (Mknk1) (Rattus norvegicus (Rat)).